Consider the following 370-residue polypeptide: Divinyl chlorophyll a/b light-harvesting protein PcbD (370 aa).

6 helical membrane-spanning segments follow: residues 27 to 47, 88 to 108, 140 to 160, 201 to 221, 248 to 268, and 315 to 335; these read FIASHIGHTGLIAFAAGGSTL, VAAVAIVHLVLSMVYGGGALL, FILGHHLFFFGMACIAFVEWA, VMGGHAFLAFAELTGATIHMV, AVLSWSLAGIGWMAIVAAFWA, and LVNVHYYFGFFFLQGHFWHAL.

It belongs to the PsbB/PsbC family. IsiA/Pcb subfamily. As to quaternary structure, the antenna complex consists of divinyl chlorophylls (a and b) and divinyl chlorophyll a/b binding proteins and binds more divinyl chlorophyll b than does the antenna complex from high-light-adapted Prochlorococcus. It depends on divinyl chlorophyll a as a cofactor. Divinyl chlorophyll b serves as cofactor.

It localises to the cellular thylakoid membrane. The antenna complex functions as a light receptor, it captures and delivers excitation energy to photosystems II and I. The Prochlorales pcb genes are not related to higher plant LHCs. The protein is Divinyl chlorophyll a/b light-harvesting protein PcbD (pcbD) of Prochlorococcus marinus (strain NATL2A).